The sequence spans 160 residues: MALEGVLKEGFVTTTADQLINWTRNGSLWPMTFGLACCAVEMMHAGASRYDLDRFGVVFRPSPRQSDLMIVAGTLCNKMAPALRKVYDQMPEPRWVISMGSCANGGGYYHNSYSVVRGCDRIVPVDIYVPGCPPTAEALIYGIIQLQSKIARTSTIARKA.

[4Fe-4S] cluster-binding residues include Cys37, Cys38, Cys102, and Cys132.

This sequence belongs to the complex I 20 kDa subunit family. As to quaternary structure, NDH-1 is composed of 14 different subunits. Subunits NuoB, C, D, E, F, and G constitute the peripheral sector of the complex. [4Fe-4S] cluster is required as a cofactor.

It localises to the cell membrane. The catalysed reaction is a quinone + NADH + 5 H(+)(in) = a quinol + NAD(+) + 4 H(+)(out). NDH-1 shuttles electrons from NADH, via FMN and iron-sulfur (Fe-S) centers, to quinones in the respiratory chain. Couples the redox reaction to proton translocation (for every two electrons transferred, four hydrogen ions are translocated across the cytoplasmic membrane), and thus conserves the redox energy in a proton gradient. The sequence is that of NADH-quinone oxidoreductase subunit B from Polynucleobacter asymbioticus (strain DSM 18221 / CIP 109841 / QLW-P1DMWA-1) (Polynucleobacter necessarius subsp. asymbioticus).